Here is a 202-residue protein sequence, read N- to C-terminus: Nucleoside triphosphate pyrophosphatase (202 aa).

The Proton acceptor role is filled by Asp77.

Belongs to the Maf family. A divalent metal cation serves as cofactor.

It is found in the cytoplasm. It catalyses the reaction a ribonucleoside 5'-triphosphate + H2O = a ribonucleoside 5'-phosphate + diphosphate + H(+). The catalysed reaction is a 2'-deoxyribonucleoside 5'-triphosphate + H2O = a 2'-deoxyribonucleoside 5'-phosphate + diphosphate + H(+). Functionally, nucleoside triphosphate pyrophosphatase. May have a dual role in cell division arrest and in preventing the incorporation of modified nucleotides into cellular nucleic acids. The polypeptide is Nucleoside triphosphate pyrophosphatase (Rickettsia canadensis (strain McKiel)).